The chain runs to 429 residues: MLILQLIAIFVLIGITAVFVAAEFAIVKIRGSKINQLIESGDSRALAAHKIISNLDEYLSACQLGITITALGLGWLGEPTFERFLHPLFTMTGIPEPFNHIVTFVVAFIIVTFLHVVMGELAPKTVSIQKAEAVSLWIAKPLIWFYKITYPFIKALNGSASFLVKLFGFHSVKEHQVVISEEELRLILSESYEKGEINQSEFRYVNKIFEFDNRVAREIMIPRTEIAVISLEQSLEEAIHHIINERYTRYPVIKDDKDHILGIINSKDMFKAYFLGQPIKLNQIMRPVIRVIESIPVQQLLIRMQKERIHMAILVDEYGGTAGLVTVEDIIEEIVGEIRDEYDQDETPHILKKGEHHYVMDGKALIDEVNDLLDIAIENEEIDTIAGWLLTQKMELKAGDVIHAEGCEFKILDAEDHHIRFVEIKKTDF.

4 consecutive transmembrane segments (helical) span residues 1 to 21 (MLILQLIAIFVLIGITAVFVA), 61 to 81 (ACQLGITITALGLGWLGEPTF), 101 to 121 (IVTFVVAFIIVTFLHVVMGEL), and 133 to 153 (AVSLWIAKPLIWFYKITYPFI). In terms of domain architecture, CNNM transmembrane spans 1–201 (MLILQLIAIF…YEKGEINQSE (201 aa)). CBS domains lie at 220 to 281 (MIPR…PIKL) and 284 to 341 (IMRP…IRDE).

The protein belongs to the UPF0053 family.

It is found in the cell membrane. The chain is UPF0053 protein YugS (yugS) from Bacillus subtilis (strain 168).